The following is a 509-amino-acid chain: Sensor histidine kinase TrcS (509 aa).

2 consecutive transmembrane segments (helical) span residues 24–44 (LLLGVLAVVTVVLVAVGVVSV) and 188–208 (VALVGAALVVTAALTVWVVGY). In terms of domain architecture, HAMP spans 207-269 (GYALRPLRRV…LLDNVDGALA (63 aa)). A Histidine kinase domain is found at 284–502 (DASHELRTPL…VFRVRLPMIE (219 aa)). H287 is modified (phosphohistidine; by autocatalysis).

A divalent metal cation serves as cofactor. In terms of processing, autophosphorylated.

Its subcellular location is the cell membrane. The catalysed reaction is ATP + protein L-histidine = ADP + protein N-phospho-L-histidine.. In terms of biological role, member of the two-component regulatory system TrcS/TrcR. Phosphorylates TrcR. The TrcR-TrcS regulatory system may act as a transition regulatory system involved in adapting to an intracellular environment and transitioning from latency to reactivation. The sequence is that of Sensor histidine kinase TrcS from Mycobacterium tuberculosis (strain ATCC 25618 / H37Rv).